Here is a 302-residue protein sequence, read N- to C-terminus: MKRDVLSITDLSKEEIYELLESAADLKAKRKAGESTEYLKNKSLGMIFEKSSTRTRVSFEVAMTDFGGHALYLNSRDIQVGRGETIEDTARTLSGYLHGLMARVMSHDTVEKLAKYSTMPVINALSDREHPCQILGDFMTIMEFKKKFEGLKFAWVGDGNNVCNSALLGSAIMGMEFAVACPKGYEPKAEFLEQAKALGGKFTITDDPKVAAKDADIIYTDVWVSMGDEAEQEKRLREFASFQVNTELLGVAKPDVIVMHCLPARRGLEITDEVMDGPNSVIFEEAENRLHAQKALILKLMR.

Residues 52-55 (STRT), Q79, R103, and 130-133 (HPCQ) contribute to the carbamoyl phosphate site. L-ornithine is bound by residues N161, D221, and 225–226 (SM). Carbamoyl phosphate-binding positions include 261–262 (CL) and R289.

This sequence belongs to the aspartate/ornithine carbamoyltransferase superfamily. OTCase family.

It is found in the cytoplasm. It catalyses the reaction carbamoyl phosphate + L-ornithine = L-citrulline + phosphate + H(+). The protein operates within amino-acid biosynthesis; L-arginine biosynthesis; L-arginine from L-ornithine and carbamoyl phosphate: step 1/3. Its function is as follows. Reversibly catalyzes the transfer of the carbamoyl group from carbamoyl phosphate (CP) to the N(epsilon) atom of ornithine (ORN) to produce L-citrulline. This is Ornithine carbamoyltransferase from Methanosarcina acetivorans (strain ATCC 35395 / DSM 2834 / JCM 12185 / C2A).